The following is a 136-amino-acid chain: Large ribosomal subunit protein uL16 (136 aa).

It belongs to the universal ribosomal protein uL16 family. Part of the 50S ribosomal subunit.

Its function is as follows. Binds 23S rRNA and is also seen to make contacts with the A and possibly P site tRNAs. This chain is Large ribosomal subunit protein uL16, found in Wigglesworthia glossinidia brevipalpis.